A 321-amino-acid chain; its full sequence is Methionyl-tRNA formyltransferase (321 aa).

112–115 serves as a coordination point for (6S)-5,6,7,8-tetrahydrofolate; sequence SILP.

Belongs to the Fmt family.

The catalysed reaction is L-methionyl-tRNA(fMet) + (6R)-10-formyltetrahydrofolate = N-formyl-L-methionyl-tRNA(fMet) + (6S)-5,6,7,8-tetrahydrofolate + H(+). In terms of biological role, attaches a formyl group to the free amino group of methionyl-tRNA(fMet). The formyl group appears to play a dual role in the initiator identity of N-formylmethionyl-tRNA by promoting its recognition by IF2 and preventing the misappropriation of this tRNA by the elongation apparatus. This chain is Methionyl-tRNA formyltransferase, found in Shewanella piezotolerans (strain WP3 / JCM 13877).